We begin with the raw amino-acid sequence, 166 residues long: MSAQIENSIPLDFDLGNMAAFDISPLDETKLSGSEKESFLFSLSRDNVQQLVNKMISLPKERTSDGVLLQLPETVTPLPRAKPLPKPKPETKWQRFARIKGIAPKKREGRLVFDEASGEWVPKWGYKGKNKELETQWLVEEGEKEKKLTSKQVRNTSKKIKRSRRH.

Serine 34 and serine 64 each carry phosphoserine. The tract at residues 144–166 (KEKKLTSKQVRNTSKKIKRSRRH) is disordered. A compositionally biased stretch (basic residues) spans 156–166 (TSKKIKRSRRH).

It belongs to the RRS1 family. Component of a hexameric 5S RNP precursor complex, composed of 5S RNA, rrs1, rpf2, rpl5a/rpl5b, rpl11a/rpl11b and syo1; this complex acts as a precursor for ribosome assembly. Interacts with sad1.

The protein localises to the nucleus. Its subcellular location is the nucleolus. Its function is as follows. Involved in ribosomal large subunit assembly. This is Ribosome biogenesis regulatory protein homolog from Schizosaccharomyces pombe (strain 972 / ATCC 24843) (Fission yeast).